The sequence spans 1250 residues: Phospholipid-transporting ATPase IC (1250 aa).

2 stretches are compositionally biased toward acidic residues: residues 1 to 13 (MDTD…EDDS) and 24 to 40 (SDDE…TDEP). Residues 1 to 52 (MDTDYESTYEDDSQVPNDDVVPYSDDETDDELDSPQTDEPEQNRRNVQAEQS) are disordered. Over 1-133 (MDTDYESTYE…VLLILQTIPQ (133 aa)) the chain is Cytoplasmic. A helical membrane pass occupies residues 134–154 (ISTVTWSTTLIPLLLVLGITA). Residues 155–338 (IKDLVDDIAR…TKIDYLMNYM (184 aa)) are Exoplasmic loop-facing. Residues 339 to 359 (VYTIFVLLILAAAGLAIGQTF) form a helical membrane-spanning segment. Residues 360-385 (WEAKLGAANVSWYLYDGNNYSPSYRG) lie on the Cytoplasmic side of the membrane. The chain crosses the membrane as a helical span at residues 386–406 (FLAFWGYIIVLNTMVPISLYV). The Exoplasmic loop segment spans residues 407 to 956 (SVEVIRLGQS…KFLRYFFYKN (550 aa)). The active-site 4-aspartylphosphate intermediate is the Asp-454. Residues Asp-454, Lys-455, Thr-456, Glu-553, Phe-594, Lys-617, Arg-650, Thr-730, Gly-731, Asp-732, Arg-865, and Lys-871 each contribute to the ATP site. Residue Asp-454 participates in Mg(2+) binding. Residue Thr-456 participates in Mg(2+) binding. Asp-891 provides a ligand contact to Mg(2+). Residues Asn-894 and Asp-895 each contribute to the ATP site. Asp-895 is a Mg(2+) binding site. Residues 957–977 (FSFTLVHFWYSFFNGFSAQTV) traverse the membrane as a helical segment. Residues 978 to 980 (YED) are Cytoplasmic-facing. A helical transmembrane segment spans residues 981–1001 (WFITLYNVLYSSLPVLLVGLL). Topologically, residues 1002–1034 (DQDVSDKLSLAFPRLYVPGQKDLLFNYKKFFLS) are exoplasmic loop. A helical transmembrane segment spans residues 1035-1055 (LFHGIVTSLIIFFIPYGAFLL). Residues 1056–1069 (TMGQDGEAPSDYQS) lie on the Cytoplasmic side of the membrane. Residues 1070–1090 (FAVTTATALVITVNFQIGLDT) form a helical membrane-spanning segment. Residues 1091–1092 (SY) lie on the Exoplasmic loop side of the membrane. A helical transmembrane segment spans residues 1093 to 1113 (WTFVNAFSIFGSIAIYFGIMF). Topologically, residues 1114 to 1117 (DLHS) are cytoplasmic. Residues 1118–1138 (AGIHVLFPSMFIFTGAAPNAL) form a helical membrane-spanning segment. At 1139–1140 (RQ) the chain is on the exoplasmic loop side. Residues 1141-1161 (PYLWLTIILTVAFCLLPIVAL) traverse the membrane as a helical segment. Residues 1162–1250 (RFLAKTIWPS…AQITHFTPQT (89 aa)) lie on the Cytoplasmic side of the membrane.

Belongs to the cation transport ATPase (P-type) (TC 3.A.3) family. Type IV subfamily. In terms of assembly, component of a P4-ATPase flippase complex which consists of a catalytic alpha subunit and an accessory beta subunit. The flippase ATP8B1:TMEM30A complex can form an intermediate phosphoenzyme in vitro. Also interacts with beta subunit TMEM30B. The cofactor is Mg(2+).

The protein resides in the cell membrane. Its subcellular location is the apical cell membrane. It is found in the cell projection. The protein localises to the stereocilium. It localises to the endoplasmic reticulum. The protein resides in the golgi apparatus. The enzyme catalyses ATP + H2O + phospholipidSide 1 = ADP + phosphate + phospholipidSide 2.. It carries out the reaction a 1,2-diacyl-sn-glycero-3-phospho-L-serine(out) + ATP + H2O = a 1,2-diacyl-sn-glycero-3-phospho-L-serine(in) + ADP + phosphate + H(+). In terms of biological role, catalytic component of a P4-ATPase flippase complex which catalyzes the hydrolysis of ATP coupled to the transport of aminophospholipids from the outer to the inner leaflet of various membranes and ensures the maintenance of asymmetric distribution of phospholipids. Phospholipid translocation also seems to be implicated in vesicle formation and in uptake of lipid signaling molecules. May also participate in the establishment of the canalicular membrane integrity by ensuring asymmetric distribution of phospholipids in the canicular membrane. The protein is Phospholipid-transporting ATPase IC (atp8b1) of Xenopus tropicalis (Western clawed frog).